We begin with the raw amino-acid sequence, 557 residues long: Glutamine--tRNA ligase (557 aa).

A 'HIGH' region motif is present at residues 42–52 (PEPNGYLHIGH). Residues 43-45 (EPN) and 49-55 (HIGHAKS) contribute to the ATP site. L-glutamine-binding residues include aspartate 75 and tyrosine 220. Residues threonine 239 and 270 to 271 (RL) contribute to the ATP site. The 'KMSKS' region motif lies at 277 to 281 (LTSKR).

It belongs to the class-I aminoacyl-tRNA synthetase family. Monomer.

It is found in the cytoplasm. The enzyme catalyses tRNA(Gln) + L-glutamine + ATP = L-glutaminyl-tRNA(Gln) + AMP + diphosphate. This chain is Glutamine--tRNA ligase, found in Haemophilus influenzae (strain 86-028NP).